A 607-amino-acid chain; its full sequence is Phosphogluconate dehydratase (607 aa).

[4Fe-4S] cluster contacts are provided by cysteine 156 and cysteine 223.

This sequence belongs to the IlvD/Edd family. The cofactor is [4Fe-4S] cluster.

The catalysed reaction is 6-phospho-D-gluconate = 2-dehydro-3-deoxy-6-phospho-D-gluconate + H2O. It functions in the pathway carbohydrate metabolism; Entner-Doudoroff pathway. Functionally, catalyzes the dehydration of 6-phospho-D-gluconate to 2-dehydro-3-deoxy-6-phospho-D-gluconate. This is Phosphogluconate dehydratase from Zymomonas mobilis subsp. mobilis (strain ATCC 31821 / ZM4 / CP4).